Consider the following 194-residue polypeptide: uncharacterized protein (194 aa).

2 disordered regions span residues Met-1–Glu-72 and Val-113–Val-194. Residues Ala-26–Ala-39 are compositionally biased toward basic and acidic residues. Polar residues predominate over residues Gly-146–Arg-171.

This is an uncharacterized protein from Homo sapiens (Human).